The following is a 217-amino-acid chain: 3,4-dihydroxy-2-butanone 4-phosphate synthase (217 aa).

D-ribulose 5-phosphate contacts are provided by residues 37–38, Asp42, 150–154, and Glu174; these read RE and RRGHT. A Mg(2+)-binding site is contributed by Glu38. His153 is a binding site for Mg(2+).

It belongs to the DHBP synthase family. As to quaternary structure, homodimer. It depends on Mg(2+) as a cofactor. Mn(2+) serves as cofactor.

The enzyme catalyses D-ribulose 5-phosphate = (2S)-2-hydroxy-3-oxobutyl phosphate + formate + H(+). The protein operates within cofactor biosynthesis; riboflavin biosynthesis; 2-hydroxy-3-oxobutyl phosphate from D-ribulose 5-phosphate: step 1/1. In terms of biological role, catalyzes the conversion of D-ribulose 5-phosphate to formate and 3,4-dihydroxy-2-butanone 4-phosphate. This chain is 3,4-dihydroxy-2-butanone 4-phosphate synthase, found in Tolumonas auensis (strain DSM 9187 / NBRC 110442 / TA 4).